The following is a 556-amino-acid chain: CDP-diacylglycerol--glycerol-3-phosphate 3-phosphatidyltransferase, mitochondrial (556 aa).

A mitochondrion-targeting transit peptide spans Met-1–Ala-28. Ser-49 carries the post-translational modification Phosphoserine. Ala-124–Gly-131 contributes to the ATP binding site. PLD phosphodiesterase domains follow at residues Thr-215–Tyr-241 and Arg-460–Ser-493. Residues His-220, Lys-222, and Asp-227 contribute to the active site.

This sequence belongs to the CDP-alcohol phosphatidyltransferase class-II family.

It localises to the mitochondrion. It carries out the reaction a CDP-1,2-diacyl-sn-glycerol + sn-glycerol 3-phosphate = a 1,2-diacyl-sn-glycero-3-phospho-(1'-sn-glycero-3'-phosphate) + CMP + H(+). It functions in the pathway phospholipid metabolism; phosphatidylglycerol biosynthesis; phosphatidylglycerol from CDP-diacylglycerol: step 1/2. With respect to regulation, activated by calcium and magnesium and inhibited by other bivalent cations. Its function is as follows. Functions in the biosynthesis of the anionic phospholipids phosphatidylglycerol and cardiolipin. This is CDP-diacylglycerol--glycerol-3-phosphate 3-phosphatidyltransferase, mitochondrial (PGS1) from Homo sapiens (Human).